We begin with the raw amino-acid sequence, 343 residues long: Holliday junction branch migration complex subunit RuvB (343 aa).

The tract at residues 1 to 181 is large ATPase domain (RuvB-L); that stretch reads MDRIIDTAAT…FGIVQRLEFY (181 aa). ATP-binding positions include isoleucine 20, arginine 21, glycine 62, lysine 65, threonine 66, threonine 67, 128-130, arginine 171, tyrosine 181, and arginine 218; that span reads EDF. Residue threonine 66 participates in Mg(2+) binding. A small ATPAse domain (RuvB-S) region spans residues 182–252; that stretch reads SPEDLARIVR…VAQAAMQMLK (71 aa). The interval 255–343 is head domain (RuvB-H); sequence QGGFDELDRR…SAFTDPEDLF (89 aa). DNA is bound by residues arginine 291, arginine 310, and arginine 315.

It belongs to the RuvB family. Homohexamer. Forms an RuvA(8)-RuvB(12)-Holliday junction (HJ) complex. HJ DNA is sandwiched between 2 RuvA tetramers; dsDNA enters through RuvA and exits via RuvB. An RuvB hexamer assembles on each DNA strand where it exits the tetramer. Each RuvB hexamer is contacted by two RuvA subunits (via domain III) on 2 adjacent RuvB subunits; this complex drives branch migration. In the full resolvosome a probable DNA-RuvA(4)-RuvB(12)-RuvC(2) complex forms which resolves the HJ.

The protein localises to the cytoplasm. It carries out the reaction ATP + H2O = ADP + phosphate + H(+). The RuvA-RuvB-RuvC complex processes Holliday junction (HJ) DNA during genetic recombination and DNA repair, while the RuvA-RuvB complex plays an important role in the rescue of blocked DNA replication forks via replication fork reversal (RFR). RuvA specifically binds to HJ cruciform DNA, conferring on it an open structure. The RuvB hexamer acts as an ATP-dependent pump, pulling dsDNA into and through the RuvAB complex. RuvB forms 2 homohexamers on either side of HJ DNA bound by 1 or 2 RuvA tetramers; 4 subunits per hexamer contact DNA at a time. Coordinated motions by a converter formed by DNA-disengaged RuvB subunits stimulates ATP hydrolysis and nucleotide exchange. Immobilization of the converter enables RuvB to convert the ATP-contained energy into a lever motion, pulling 2 nucleotides of DNA out of the RuvA tetramer per ATP hydrolyzed, thus driving DNA branch migration. The RuvB motors rotate together with the DNA substrate, which together with the progressing nucleotide cycle form the mechanistic basis for DNA recombination by continuous HJ branch migration. Branch migration allows RuvC to scan DNA until it finds its consensus sequence, where it cleaves and resolves cruciform DNA. The chain is Holliday junction branch migration complex subunit RuvB from Xylella fastidiosa (strain 9a5c).